Consider the following 250-residue polypeptide: Triosephosphate isomerase (250 aa).

9-11 provides a ligand contact to substrate; sequence NWK. The active-site Electrophile is the His-96. The active-site Proton acceptor is Glu-168. Substrate is bound by residues Gly-174, Ser-216, and 237–238; that span reads GG.

This sequence belongs to the triosephosphate isomerase family. In terms of assembly, homodimer.

The protein localises to the cytoplasm. It carries out the reaction D-glyceraldehyde 3-phosphate = dihydroxyacetone phosphate. It participates in carbohydrate biosynthesis; gluconeogenesis. It functions in the pathway carbohydrate degradation; glycolysis; D-glyceraldehyde 3-phosphate from glycerone phosphate: step 1/1. In terms of biological role, involved in the gluconeogenesis. Catalyzes stereospecifically the conversion of dihydroxyacetone phosphate (DHAP) to D-glyceraldehyde-3-phosphate (G3P). The protein is Triosephosphate isomerase of Leptospira borgpetersenii serovar Hardjo-bovis (strain JB197).